The primary structure comprises 277 residues: NH(3)-dependent NAD(+) synthetase (277 aa).

36–43 (GLSGGIDS) serves as a coordination point for ATP. Residue D42 participates in Mg(2+) binding. Residue R118 participates in deamido-NAD(+) binding. T138 contacts ATP. Position 143 (E143) interacts with Mg(2+). The ATP site is built by K167 and S189.

It belongs to the NAD synthetase family. Homodimer.

It catalyses the reaction deamido-NAD(+) + NH4(+) + ATP = AMP + diphosphate + NAD(+) + H(+). The protein operates within cofactor biosynthesis; NAD(+) biosynthesis; NAD(+) from deamido-NAD(+) (ammonia route): step 1/1. Functionally, catalyzes the ATP-dependent amidation of deamido-NAD to form NAD. Uses ammonia as a nitrogen source. This Chlorobium phaeobacteroides (strain DSM 266 / SMG 266 / 2430) protein is NH(3)-dependent NAD(+) synthetase.